A 469-amino-acid chain; its full sequence is Glutamate--tRNA ligase (469 aa).

The 'HIGH' region signature appears at 11-21; it reads PSPTGFIHLGN. The 'KMSKS' region motif lies at 243 to 247; that stretch reads KMSKR. ATP is bound at residue lysine 246.

This sequence belongs to the class-I aminoacyl-tRNA synthetase family. Glutamate--tRNA ligase type 1 subfamily. Monomer.

It localises to the cytoplasm. It catalyses the reaction tRNA(Glu) + L-glutamate + ATP = L-glutamyl-tRNA(Glu) + AMP + diphosphate. In terms of biological role, catalyzes the attachment of glutamate to tRNA(Glu) in a two-step reaction: glutamate is first activated by ATP to form Glu-AMP and then transferred to the acceptor end of tRNA(Glu). In Burkholderia lata (strain ATCC 17760 / DSM 23089 / LMG 22485 / NCIMB 9086 / R18194 / 383), this protein is Glutamate--tRNA ligase.